The sequence spans 342 residues: Polygalacturonase inhibitor 2 (342 aa).

A signal peptide spans 1 to 29 (MTQFNIPVTMSSSLSIILVILVSLSTAHS). 2 cysteine pairs are disulfide-bonded: Cys-32-Cys-62 and Cys-63-Cys-72. N-linked (GlcNAc...) (complex) asparagine glycosylation occurs at Asn-64. 10 LRR repeats span residues 82 to 107 (NNLD…LPYL), 108 to 132 (NFLY…LTQL), 133 to 156 (HYLY…IKTL), 157 to 180 (VTLD…LPNL), 181 to 205 (VGIT…SKLF), 206 to 228 (TSMT…NLNL), 229 to 252 (AFVD…DKNT), 253 to 275 (QKIH…SKNL), 276 to 299 (NGLD…LKFL), and 300 to 319 (HSLN…GGNL). A glycan (N-linked (GlcNAc...) (complex) asparagine) is linked at Asn-141. Asn-303 is a glycosylation site (N-linked (GlcNAc...) asparagine). 2 cysteine pairs are disulfide-bonded: Cys-310-Cys-332 and Cys-334-Cys-341.

It belongs to the polygalacturonase-inhibiting protein family. Asn-303 is not glycosylated.

Its subcellular location is the secreted. The protein resides in the cell wall. The protein localises to the membrane. Functionally, inhibitor of fungal polygalacturonase. It is an important factor for plant resistance to phytopathogenic fungi. Inhibits all polygalacturonases (PG) tested, with the exception of PG from F.oxysporum which was only inhibited at 60%. The protein is Polygalacturonase inhibitor 2 (PGIP2) of Phaseolus vulgaris (Kidney bean).